Consider the following 356-residue polypeptide: Chitin elicitor-binding protein (356 aa).

An N-terminal signal peptide occupies residues 1–28 (MASLTAALATPAAAALLLLVLLAAPASA). Asn30 is a glycosylation site (N-linked (GlcNAc...) asparagine). Disulfide bonds link Cys33/Cys100, Cys41/Cys164, Cys98/Cys162, and Cys100/Cys164. 50 to 51 (PN) is a chitin binding site. N-linked (GlcNAc...) asparagine glycosylation is found at Asn63 and Asn89. LysM domains follow at residues 111-158 (PIYV…TLWI) and 175-219 (LAYS…ILDV). Chitin contacts are provided by residues 117–123 (PQDGLDA), Asn142, 145–152 (PDPNKINV), Thr155, and Gly182. N-linked (GlcNAc...) asparagine glycosylation occurs at Asn151. Residue Asn184 is glycosylated (N-linked (GlcNAc...) asparagine). Chitin-binding positions include Ser186 and 211-213 (LQM). Disulfide bonds link Cys224-Cys257 and Cys252-Cys274. Asn265, Asn281, Asn290, Asn306, and Asn319 each carry an N-linked (GlcNAc...) asparagine glycan. The chain crosses the membrane as a helical span at residues 336–356 (RSMWSMSVISFHMVLIIICFL).

As to quaternary structure, forms homooligomer. Interacts with CERK1. Binds to chitin oligosaccharide elicitor. Interacts with LYP4 and LYP6. In terms of processing, N-glycosylated. Expressed in seedlings, roots, shoots, stems and flowers.

It localises to the cell membrane. In terms of biological role, chitin elicitor-binding protein involved in the perception and transduction of chitin oligosaccharide elicitor signal for defense responses. The protein is Chitin elicitor-binding protein of Oryza sativa subsp. japonica (Rice).